We begin with the raw amino-acid sequence, 111 residues long: Ig kappa chain V region 3368 (111 aa).

A framework-1 region spans residues 1-24 (ADIVMTQTPSSVSAAVGGTVTIKC). The segment at 25–35 (QASESIGNELA) is complementarity-determining-1. Positions 36 to 50 (WYQQKPGQPPKLLIY) are framework-2. The complementarity-determining-2 stretch occupies residues 51–57 (RASKLAS). The interval 58–89 (GVSSRFKGSGSGTEFTLTISGVQCDDAGIYYC) is framework-3. The complementarity-determining-3 stretch occupies residues 90-101 (QQDWNSNNVVNN). A framework-4 region spans residues 102–111 (FGGGTEVVVK).

The sequence is that of Ig kappa chain V region 3368 from Oryctolagus cuniculus (Rabbit).